The primary structure comprises 39 residues: MPFPSILHLTIGRYASYDSNNHMRRRAKLMEAIFRIRTI.

This is an uncharacterized protein from Saccharomyces cerevisiae (strain ATCC 204508 / S288c) (Baker's yeast).